The following is a 517-amino-acid chain: 2-isopropylmalate synthase (517 aa).

Residues 5–268 (IIIFDTTLRD…DTRINTQEIH (264 aa)) enclose the Pyruvate carboxyltransferase domain. Mn(2+) is bound by residues Asp-14, His-202, His-204, and Asn-238. The tract at residues 393–517 (SLDVITSQTI…ADLKSHKISQ (125 aa)) is regulatory domain.

The protein belongs to the alpha-IPM synthase/homocitrate synthase family. LeuA type 1 subfamily. As to quaternary structure, homodimer. Requires Mn(2+) as cofactor.

It is found in the cytoplasm. The enzyme catalyses 3-methyl-2-oxobutanoate + acetyl-CoA + H2O = (2S)-2-isopropylmalate + CoA + H(+). It functions in the pathway amino-acid biosynthesis; L-leucine biosynthesis; L-leucine from 3-methyl-2-oxobutanoate: step 1/4. In terms of biological role, catalyzes the condensation of the acetyl group of acetyl-CoA with 3-methyl-2-oxobutanoate (2-ketoisovalerate) to form 3-carboxy-3-hydroxy-4-methylpentanoate (2-isopropylmalate). This Histophilus somni (strain 129Pt) (Haemophilus somnus) protein is 2-isopropylmalate synthase.